Consider the following 335-residue polypeptide: Phosphate acyltransferase (335 aa).

The protein belongs to the PlsX family. In terms of assembly, homodimer. Probably interacts with PlsY.

Its subcellular location is the cytoplasm. The catalysed reaction is a fatty acyl-[ACP] + phosphate = an acyl phosphate + holo-[ACP]. It functions in the pathway lipid metabolism; phospholipid metabolism. Functionally, catalyzes the reversible formation of acyl-phosphate (acyl-PO(4)) from acyl-[acyl-carrier-protein] (acyl-ACP). This enzyme utilizes acyl-ACP as fatty acyl donor, but not acyl-CoA. The sequence is that of Phosphate acyltransferase from Streptococcus pyogenes serotype M28 (strain MGAS6180).